A 411-amino-acid polypeptide reads, in one-letter code: Inhibin beta B chain (411 aa).

An N-terminal signal peptide occupies residues methionine 1–glycine 28. Residues tryptophan 27–glutamate 69 form a disordered region. The propeptide occupies serine 29–arginine 296. Over residues proline 30 to alanine 47 the composition is skewed to pro residues. N-linked (GlcNAc...) asparagine glycosylation occurs at asparagine 97. 4 cysteine pairs are disulfide-bonded: cysteine 300–cysteine 308, cysteine 307–cysteine 376, cysteine 336–cysteine 408, and cysteine 340–cysteine 410.

The protein belongs to the TGF-beta family. As to quaternary structure, dimeric, linked by one or more disulfide bonds. Inhibin B is a dimer of alpha and beta-B. Activin B is a homodimer of beta-B. Activin AB is a dimer of beta-A and beta-B. Interacts with FST and FSTL3. As to expression, alpha- and beta-B subunits are the predominant forms found in rat testis. Also expressed in ovary.

The protein localises to the secreted. Functionally, inhibins and activins inhibit and activate, respectively, the secretion of follitropin by the pituitary gland. Inhibins/activins are involved in regulating a number of diverse functions such as hypothalamic and pituitary hormone secretion, gonadal hormone secretion, germ cell development and maturation, erythroid differentiation, insulin secretion, nerve cell survival, embryonic axial development or bone growth, depending on their subunit composition. Inhibins appear to oppose the functions of activins. Activin B is a dimer of alpha and beta-B that plays a role in several essential biological processes including embryonic development, stem cell maintenance and differentiation, haematopoiesis, cell proliferation and wound healing. Signals through type I receptor ACVR1C, abundantly expressed in pancreatic beta cells, and type II receptors like ACVR2A. Upon ligand binding, these receptors phosphorylate intracellular signaling mediators SMAD2 and SMAD3, which form a complex with SMAD4, translocate to the nucleus, and regulate gene expression. Plays a crucial role in the induction of hepcidin by inflammation through activation of ACVR1C and subsequent phosphorylation of SMAD1/5/8. Regulates adipocyte lipid metabolism by decreasing non-esterified fatty acids and glycerol release and increases intracellular triglyceride content. Stimulates wound healing by promoting cell migration and hair follicle regeneration through the JNK and ERK signaling pathways downstream of RHOA. Its function is as follows. Inhibin B is a dimer of alpha and beta-B that plays a crucial role in the regulation of the reproductive system by inhibiting the secretion of follicle-stimulating hormone (FSH) from the anterior pituitary gland. Thereby, maintains reproductive homeostasis in both males and females. Acts as a more potent suppressor of FSH release than inhibin A. Functions as competitive receptor antagonist binding activin type II receptors with high affinity in the presence of the TGF-beta type III coreceptor/TGFBR3L. This Rattus norvegicus (Rat) protein is Inhibin beta B chain (Inhbb).